Consider the following 1157-residue polypeptide: Probable ATP-dependent RNA helicase DHX37 (1157 aa).

Basic residues predominate over residues Met1 to Ile10. Disordered regions lie at residues Met1–Lys77 and Thr116–Pro225. Pro residues predominate over residues Ser21–Val30. Residues Ala159–Ala184 are compositionally biased toward acidic residues. Pro residues-rich tracts occupy residues Pro198–Gln208 and Val216–Pro225. The Helicase ATP-binding domain maps to Met262–Val429. Gly275 to Thr282 contacts ATP. The short motif at Asp372–His375 is the DEAH box element. Positions Lys459 to Asn716 constitute a Helicase C-terminal domain. Disordered regions lie at residues Pro494–Arg523 and Val542–Ala584. A compositionally biased stretch (basic and acidic residues) spans Arg499–Arg515. The segment covering Glu547–Leu571 has biased composition (acidic residues).

This sequence belongs to the DEAD box helicase family. DEAH subfamily. In terms of assembly, part of the small subunit (SSU) processome, composed of more than 70 proteins and the RNA chaperone small nucleolar RNA (snoRNA) U3. Interacts with UTP14A. As to expression, expressed in the fallopian tube, ovary, uterus and testis. Also expressed in the brain.

The protein localises to the nucleus. Its subcellular location is the nucleolus. It is found in the cytoplasm. The protein resides in the nucleus membrane. It carries out the reaction ATP + H2O = ADP + phosphate + H(+). In terms of biological role, ATP-binding RNA helicase that plays a role in maturation of the small ribosomal subunit in ribosome biogenesis. Required for the release of the U3 snoRNP from pre-ribosomal particles. Part of the small subunit (SSU) processome, first precursor of the small eukaryotic ribosomal subunit. During the assembly of the SSU processome in the nucleolus, many ribosome biogenesis factors, an RNA chaperone and ribosomal proteins associate with the nascent pre-rRNA and work in concert to generate RNA folding, modifications, rearrangements and cleavage as well as targeted degradation of pre-ribosomal RNA by the RNA exosome. Plays a role in early testis development. Probably also plays a role in brain development. This chain is Probable ATP-dependent RNA helicase DHX37, found in Homo sapiens (Human).